The primary structure comprises 83 residues: Exodeoxyribonuclease 7 small subunit (83 aa).

This sequence belongs to the XseB family. In terms of assembly, heterooligomer composed of large and small subunits.

It is found in the cytoplasm. It catalyses the reaction Exonucleolytic cleavage in either 5'- to 3'- or 3'- to 5'-direction to yield nucleoside 5'-phosphates.. Functionally, bidirectionally degrades single-stranded DNA into large acid-insoluble oligonucleotides, which are then degraded further into small acid-soluble oligonucleotides. The polypeptide is Exodeoxyribonuclease 7 small subunit (Rhodopseudomonas palustris (strain HaA2)).